Here is a 428-residue protein sequence, read N- to C-terminus: C4-dicarboxylate transport protein (428 aa).

8 consecutive transmembrane segments (helical) span residues 8–28 (SLYF…HFYP), 44–64 (LIKM…IAGM), 76–96 (VALL…LIIV), 142–162 (IGAF…LFGF), 184–204 (VIFG…FGAM), 222–242 (LIIC…GSIA), 326–346 (IVHQ…AAGV), and 352–372 (IVLA…LALI).

It belongs to the dicarboxylate/amino acid:cation symporter (DAACS) (TC 2.A.23) family.

The protein resides in the cell inner membrane. Responsible for the transport of dicarboxylates such as succinate, fumarate, and malate from the periplasm across the membrane. This Escherichia coli O139:H28 (strain E24377A / ETEC) protein is C4-dicarboxylate transport protein.